We begin with the raw amino-acid sequence, 629 residues long: tRNA uridine 5-carboxymethylaminomethyl modification enzyme MnmG (629 aa).

Residues 13–18 (GGGHAG), V125, and S180 each bind FAD. Residue 273–287 (GPRYCPSIEDKVMRF) coordinates NAD(+). Q370 is a binding site for FAD.

This sequence belongs to the MnmG family. In terms of assembly, homodimer. Heterotetramer of two MnmE and two MnmG subunits. Requires FAD as cofactor.

Its subcellular location is the cytoplasm. Functionally, NAD-binding protein involved in the addition of a carboxymethylaminomethyl (cmnm) group at the wobble position (U34) of certain tRNAs, forming tRNA-cmnm(5)s(2)U34. This is tRNA uridine 5-carboxymethylaminomethyl modification enzyme MnmG from Salmonella dublin (strain CT_02021853).